The following is a 151-amino-acid chain: UPF0208 membrane protein NT01EI_2692 (151 aa).

The next 2 membrane-spanning stretches (helical) occupy residues 46–65 (FAIRFMPPIAMFTLCWQIAL) and 69–91 (LGPAIATALFACSLPMQGLWWLG).

This sequence belongs to the UPF0208 family.

Its subcellular location is the cell inner membrane. This is UPF0208 membrane protein NT01EI_2692 from Edwardsiella ictaluri (strain 93-146).